Consider the following 215-residue polypeptide: MRLEAENLAGERGGETIFSHLSFTIGTGQALVVTGPNGSGKSTLLRIICGLLAPEAGEVKLTEGTQIVPVRAACHYLGHQNAMKPALSVRENLLFWQKFNGGEALDIGAALEAVDLAGVEHLPFGYLSTGQKRRVSIAKLLVSHRPLWIVDEPTAGLDKASEARFAELMREHMRQDGMIIAATHIPLGLDGAISTTGNGLVRSLDMAAFSVEDIA.

The ABC transporter domain occupies 3–215 (LEAENLAGER…MAAFSVEDIA (213 aa)). 35–42 (GPNGSGKS) serves as a coordination point for ATP.

It belongs to the ABC transporter superfamily. CcmA exporter (TC 3.A.1.107) family. In terms of assembly, the complex is composed of two ATP-binding proteins (CcmA) and two transmembrane proteins (CcmB).

It is found in the cell inner membrane. The enzyme catalyses heme b(in) + ATP + H2O = heme b(out) + ADP + phosphate + H(+). Its function is as follows. Part of the ABC transporter complex CcmAB involved in the biogenesis of c-type cytochromes; once thought to export heme, this seems not to be the case, but its exact role is uncertain. Responsible for energy coupling to the transport system. The protein is Cytochrome c biogenesis ATP-binding export protein CcmA of Brucella melitensis biotype 1 (strain ATCC 23456 / CCUG 17765 / NCTC 10094 / 16M).